We begin with the raw amino-acid sequence, 643 residues long: tRNA 5-methylaminomethyl-2-thiouridine biosynthesis bifunctional protein MnmC (643 aa).

The segment at 1-223 is tRNA (mnm(5)s(2)U34)-methyltransferase; it reads MPDRLVSATL…VDDRLVGDYA (223 aa). The interval 247–643 is FAD-dependent cmnm(5)s(2)U34 oxidoreductase; sequence IGAGLAGCAV…LRARRVGSAG (397 aa).

The protein in the N-terminal section; belongs to the methyltransferase superfamily. tRNA (mnm(5)s(2)U34)-methyltransferase family. This sequence in the C-terminal section; belongs to the DAO family. It depends on FAD as a cofactor.

It localises to the cytoplasm. It carries out the reaction 5-aminomethyl-2-thiouridine(34) in tRNA + S-adenosyl-L-methionine = 5-methylaminomethyl-2-thiouridine(34) in tRNA + S-adenosyl-L-homocysteine + H(+). Functionally, catalyzes the last two steps in the biosynthesis of 5-methylaminomethyl-2-thiouridine (mnm(5)s(2)U) at the wobble position (U34) in tRNA. Catalyzes the FAD-dependent demodification of cmnm(5)s(2)U34 to nm(5)s(2)U34, followed by the transfer of a methyl group from S-adenosyl-L-methionine to nm(5)s(2)U34, to form mnm(5)s(2)U34. The sequence is that of tRNA 5-methylaminomethyl-2-thiouridine biosynthesis bifunctional protein MnmC from Burkholderia orbicola (strain MC0-3).